The chain runs to 266 residues: Interleukin-1 beta (266 aa).

Positions 1–114 are excised as a propeptide; the sequence is MAAVPELTSE…KTDADNFMSD (114 aa).

Belongs to the IL-1 family. Monomer. In its precursor form, weakly interacts with full-length MEFV; the mature cytokine does not interact at all. Interacts with integrins ITGAV:ITGBV and ITGA5:ITGB1; integrin-binding is required for IL1B signaling. Interacts with cargo receptor TMED10; the interaction is direct and is required for the secretion of IL1B mature form. Interacts with HSP90AB1; the interaction facilitates cargo translocation into the ERGIC. Interacts with HSP90B1; the interaction facilitates cargo translocation into the ERGIC.

It localises to the cytoplasm. It is found in the cytosol. Its subcellular location is the secreted. The protein localises to the lysosome. The protein resides in the extracellular exosome. Its function is as follows. Potent pro-inflammatory cytokine. Initially discovered as the major endogenous pyrogen, induces prostaglandin synthesis, neutrophil influx and activation, T-cell activation and cytokine production, B-cell activation and antibody production, and fibroblast proliferation and collagen production. Promotes Th17 differentiation of T-cells. Synergizes with IL12/interleukin-12 to induce IFNG synthesis from T-helper 1 (Th1) cells. Plays a role in angiogenesis by inducing VEGF production synergistically with TNF and IL6. Involved in transduction of inflammation downstream of pyroptosis: its mature form is specifically released in the extracellular milieu by passing through the gasdermin-D (GSDMD) pore. The polypeptide is Interleukin-1 beta (IL1B) (Canis lupus familiaris (Dog)).